Here is a 94-residue protein sequence, read N- to C-terminus: Small ubiquitin-related modifier 3 (94 aa).

Residue lysine 11 forms a Glycyl lysine isopeptide (Lys-Gly) (interchain with G-Cter in SUMO) linkage. The Ubiquitin-like domain maps to 15 to 92 (DHINLKVAGQ…IDVFQQQTGG (78 aa)). Glycine 92 participates in a covalent cross-link: Glycyl lysine isopeptide (Gly-Lys) (interchain with K-? in acceptor proteins). Residues 93–94 (SC) constitute a propeptide that is removed on maturation.

This sequence belongs to the ubiquitin family. SUMO subfamily. In terms of assembly, interacts with sae2 and ube2i. Covalently attached to a number of proteins. Polymeric chains can be formed through Lys-11 cross-linking. Post-translationally, cleavage of precursor form by a sentrin-specific protease is necessary for function.

The protein resides in the cytoplasm. Its subcellular location is the nucleus. It localises to the PML body. In terms of biological role, ubiquitin-like protein which can be covalently attached to target lysines either as a monomer or as a lysine-linked polymer. Does not seem to be involved in protein degradation and may function as an antagonist of ubiquitin in the degradation process. Plays a role in a number of cellular processes such as nuclear transport, DNA replication and repair, mitosis and signal transduction. Covalent attachment to its substrates requires prior activation by the E1 complex sae1-sae2 and linkage to the E2 enzyme ube2i. This is Small ubiquitin-related modifier 3 (sumo3) from Danio rerio (Zebrafish).